Consider the following 240-residue polypeptide: Tetrahydromethanopterin S-methyltransferase subunit A (240 aa).

At 1–218 (MAEKREPAAG…KFHAGVHAGK (218 aa)) the chain is on the cytoplasmic side. Residue histidine 85 coordinates 5-hydroxybenzimidazolylcob(I)amide. A helical membrane pass occupies residues 219 to 239 (FEGIMIGLAITLSLLGLILFG). Arginine 240 is a topological domain (extracellular).

This sequence belongs to the MtrA family. As to quaternary structure, the complex is composed of 8 subunits; MtrA, MtrB, MtrC, MtrD, MtrE, MtrF, MtrG and MtrH. 5-hydroxybenzimidazolylcob(I)amide is required as a cofactor.

It is found in the cell membrane. The catalysed reaction is 5-methyl-5,6,7,8-tetrahydromethanopterin + coenzyme M + 2 Na(+)(in) = 5,6,7,8-tetrahydromethanopterin + methyl-coenzyme M + 2 Na(+)(out). The protein operates within one-carbon metabolism; methanogenesis from CO(2); methyl-coenzyme M from 5,10-methylene-5,6,7,8-tetrahydromethanopterin: step 2/2. Functionally, part of a complex that catalyzes the formation of methyl-coenzyme M and tetrahydromethanopterin from coenzyme M and methyl-tetrahydromethanopterin. This is an energy-conserving, sodium-ion translocating step. The sequence is that of Tetrahydromethanopterin S-methyltransferase subunit A from Methanohalophilus mahii (strain ATCC 35705 / DSM 5219 / SLP).